The primary structure comprises 285 residues: Acetyl-coenzyme A carboxylase carboxyl transferase subunit beta (285 aa).

Residues 22-285 (LWTKCEACGA…HPGVAYAPGV (264 aa)) form the CoA carboxyltransferase N-terminal domain. Residues C26, C29, C45, and C48 each coordinate Zn(2+). The segment at 26 to 48 (CEACGAQIYKKEFQENLHVCPKC) adopts a C4-type zinc-finger fold.

Belongs to the AccD/PCCB family. Acetyl-CoA carboxylase is a heterohexamer composed of biotin carboxyl carrier protein (AccB), biotin carboxylase (AccC) and two subunits each of ACCase subunit alpha (AccA) and ACCase subunit beta (AccD). Zn(2+) serves as cofactor.

It localises to the cytoplasm. It catalyses the reaction N(6)-carboxybiotinyl-L-lysyl-[protein] + acetyl-CoA = N(6)-biotinyl-L-lysyl-[protein] + malonyl-CoA. The protein operates within lipid metabolism; malonyl-CoA biosynthesis; malonyl-CoA from acetyl-CoA: step 1/1. Component of the acetyl coenzyme A carboxylase (ACC) complex. Biotin carboxylase (BC) catalyzes the carboxylation of biotin on its carrier protein (BCCP) and then the CO(2) group is transferred by the transcarboxylase to acetyl-CoA to form malonyl-CoA. This Thermus thermophilus (strain ATCC 27634 / DSM 579 / HB8) protein is Acetyl-coenzyme A carboxylase carboxyl transferase subunit beta.